We begin with the raw amino-acid sequence, 79 residues long: NAD(P)H-quinone oxidoreductase subunit L (79 aa).

Transmembrane regions (helical) follow at residues 10–30 (IIIALIYLSLSVLYLLVIPAV) and 48–68 (GFMYFLMSFFFPGMLLLSPFL).

Belongs to the complex I NdhL subunit family. NDH-1 can be composed of about 15 different subunits; different subcomplexes with different compositions have been identified which probably have different functions.

The protein localises to the cellular thylakoid membrane. It catalyses the reaction a plastoquinone + NADH + (n+1) H(+)(in) = a plastoquinol + NAD(+) + n H(+)(out). It carries out the reaction a plastoquinone + NADPH + (n+1) H(+)(in) = a plastoquinol + NADP(+) + n H(+)(out). NDH-1 shuttles electrons from an unknown electron donor, via FMN and iron-sulfur (Fe-S) centers, to quinones in the respiratory and/or the photosynthetic chain. The immediate electron acceptor for the enzyme in this species is believed to be plastoquinone. Couples the redox reaction to proton translocation, and thus conserves the redox energy in a proton gradient. Cyanobacterial NDH-1 also plays a role in inorganic carbon-concentration. This Microcystis aeruginosa (strain NIES-843 / IAM M-2473) protein is NAD(P)H-quinone oxidoreductase subunit L.